Here is an 807-residue protein sequence, read N- to C-terminus: Histone transcription regulator slm9 (807 aa).

WD repeat units lie at residues 62 to 100 (SFDSPISCIRFTYDGSCLAVATEAGTFLYHSEKWDKAFQ) and 102 to 140 (LSGPAYEVCWSQQGHILATSWKQISIYVKDEGLRTETIV). The interval 144 to 164 (EHADSNHQPAVSIEESKEAVE) is disordered. WD repeat units follow at residues 182–221 (GHHTFVGGLAFDPMGQFLASQSFDHTLKVWKLSTFGVEKS), 230–273 (PTGN…YDIN), 276–322 (GHQG…PMAV), and 326–367 (LSCS…EKMD). The interval 388 to 437 (NKNAAADRTTSPTQGQPESPSKSILLRPPPSIASSPESKRRKCPKKFVAR) is disordered. Positions 395–409 (RTTSPTQGQPESPSK) are enriched in polar residues. Phosphoserine is present on residues S406, S421, and S422. Basic residues predominate over residues 426–435 (KRRKCPKKFV). WD repeat units follow at residues 492–526 (DCSWFSYLPNAIVLANGTSVFWAVATEDSSIYIYS) and 528–574 (AGRL…AIHS).

It belongs to the WD repeat HIR1 family. In terms of assembly, interacts with hip1 and hip3.

It is found in the cytoplasm. The protein localises to the nucleus. In terms of biological role, probably required for replication-independent chromatin assembly. Required for transcriptional silencing in the outer repeat (otr) centromeric repeats and the Tf2 long terminal repeat retrotransposons. May play an indirect role in the regulation of cdc2 and/or wee1 at the G2/M stage of mitosis. This is Histone transcription regulator slm9 (slm9) from Schizosaccharomyces pombe (strain 972 / ATCC 24843) (Fission yeast).